A 185-amino-acid polypeptide reads, in one-letter code: Prenylated Rab acceptor protein 1 (185 aa).

Residues 1 to 78 (MAAQKDQQKD…RNVEYYQSNY (78 aa)) lie on the Cytoplasmic side of the membrane. A required for interaction with prenylated RAB3A and VAMP2 region spans residues 30-54 (AGREWLERRRATIRPWGTFVDQQRF). Transmembrane regions (helical) follow at residues 79–94 (VFVF…VTSP) and 95–112 (MLLV…ILYL). Topologically, residues 113 to 131 (RTLQSKLVLFGREVSPAHQ) are cytoplasmic. Transmembrane regions (helical) follow at residues 132 to 148 (YALA…LAGA) and 149 to 165 (GSAV…LIGS). The interval 165–185 (SHAAFHQIEPADGEELQMEPV) is required for interaction with GDI1. The Cytoplasmic segment spans residues 166 to 185 (HAAFHQIEPADGEELQMEPV). Residues 175-185 (ADGEELQMEPV) form a required for interaction with prenylated RAB3A and VAMP2 region. The homodimerization stretch occupies residues 175-185 (ADGEELQMEPV).

Belongs to the PRA1 family. In terms of assembly, homodimers. Interacts specifically with both prenylated Rab proteins (including RAB3A and RAB1), and VAMP2 (synaptobrevin-2), in an exclusive way. Interacts with NDRG1. Interacts with free GDI1 in the absence of Rab proteins. Also interacts with PCLO. Ubiquitous.

The protein resides in the cell membrane. It is found in the cytoplasm. It localises to the golgi apparatus. The protein localises to the cytoplasmic vesicle. Its subcellular location is the secretory vesicle. The protein resides in the synaptic vesicle. General Rab protein regulator required for vesicle formation from the Golgi complex. May control vesicle docking and fusion by mediating the action of Rab GTPases to the SNARE complexes. In addition it inhibits the removal of Rab GTPases from the membrane by GDI1. This is Prenylated Rab acceptor protein 1 (Rabac1) from Rattus norvegicus (Rat).